We begin with the raw amino-acid sequence, 269 residues long: Formamidopyrimidine-DNA glycosylase (269 aa).

Proline 2 acts as the Schiff-base intermediate with DNA in catalysis. The active-site Proton donor is the glutamate 3. Lysine 57 functions as the Proton donor; for beta-elimination activity in the catalytic mechanism. Histidine 90, arginine 109, and arginine 150 together coordinate DNA. The FPG-type zinc finger occupies 235 to 269 (QVYGRAGEACLTCGTTIKRSKHGQRTTFYCPHCQR). Arginine 259 functions as the Proton donor; for delta-elimination activity in the catalytic mechanism.

This sequence belongs to the FPG family. As to quaternary structure, monomer. Zn(2+) serves as cofactor.

The enzyme catalyses Hydrolysis of DNA containing ring-opened 7-methylguanine residues, releasing 2,6-diamino-4-hydroxy-5-(N-methyl)formamidopyrimidine.. It catalyses the reaction 2'-deoxyribonucleotide-(2'-deoxyribose 5'-phosphate)-2'-deoxyribonucleotide-DNA = a 3'-end 2'-deoxyribonucleotide-(2,3-dehydro-2,3-deoxyribose 5'-phosphate)-DNA + a 5'-end 5'-phospho-2'-deoxyribonucleoside-DNA + H(+). Functionally, involved in base excision repair of DNA damaged by oxidation or by mutagenic agents. Acts as a DNA glycosylase that recognizes and removes damaged bases. Has a preference for oxidized purines, such as 7,8-dihydro-8-oxoguanine (8-oxoG). Has AP (apurinic/apyrimidinic) lyase activity and introduces nicks in the DNA strand. Cleaves the DNA backbone by beta-delta elimination to generate a single-strand break at the site of the removed base with both 3'- and 5'-phosphates. The polypeptide is Formamidopyrimidine-DNA glycosylase (Edwardsiella ictaluri (strain 93-146)).